We begin with the raw amino-acid sequence, 270 residues long: Mlc titration factor A (270 aa).

Positions 111, 148, 152, and 211 each coordinate Zn(2+).

The protein belongs to the MtfA family. As to quaternary structure, interacts with Mlc. It depends on Zn(2+) as a cofactor.

The protein resides in the cytoplasm. In terms of biological role, involved in the modulation of the activity of the glucose-phosphotransferase system (glucose-PTS). Interacts with the transcriptional repressor Mlc, preventing its interaction with DNA and leading to the modulation of expression of genes regulated by Mlc, including ptsG, which encodes the PTS system glucose-specific EIICB component. Shows zinc-dependent metallopeptidase activity. In Yersinia pestis bv. Antiqua (strain Nepal516), this protein is Mlc titration factor A.